A 55-amino-acid polypeptide reads, in one-letter code: Large ribosomal subunit protein bL33 (55 aa).

Basic and acidic residues predominate over residues 1–11 (MAKGGREKIKL). The tract at residues 1-29 (MAKGGREKIKLESSAGTGHFYTTSKNKRT) is disordered. The segment covering 14 to 24 (SAGTGHFYTTS) has biased composition (polar residues).

This sequence belongs to the bacterial ribosomal protein bL33 family.

The chain is Large ribosomal subunit protein bL33 from Polynucleobacter asymbioticus (strain DSM 18221 / CIP 109841 / QLW-P1DMWA-1) (Polynucleobacter necessarius subsp. asymbioticus).